The primary structure comprises 150 residues: Large ribosomal subunit protein bL9 (150 aa).

The protein belongs to the bacterial ribosomal protein bL9 family.

In terms of biological role, binds to the 23S rRNA. The protein is Large ribosomal subunit protein bL9 of Alkalilimnicola ehrlichii (strain ATCC BAA-1101 / DSM 17681 / MLHE-1).